Reading from the N-terminus, the 194-residue chain is Interferon alpha (194 aa).

The signal sequence occupies residues 1–23; the sequence is MALPSSFLVALVALGCNSVCSLG. Cystine bridges form between cysteine 24–cysteine 123 and cysteine 52–cysteine 166. A glycan (N-linked (GlcNAc...) asparagine) is linked at asparagine 102.

The protein belongs to the alpha/beta interferon family.

The protein localises to the secreted. Functionally, produced by macrophages, IFN-alpha have antiviral activities. Interferon stimulates the production of two enzymes: a protein kinase and an oligoadenylate synthetase. The protein is Interferon alpha of Felis catus (Cat).